We begin with the raw amino-acid sequence, 1004 residues long: Sodium/potassium-transporting ATPase subunit alpha-B (1004 aa).

Helical transmembrane passes span 76-96 and 110-126; these read LFGGFALLLWTGAILCFLAYG and NLYLGIVLATVVIVTGI. Residues 197–216 form a disordered region; the sequence is SSLTGESEPQARSPEFTNDN. 2 helical membrane-spanning segments follow: residues 272-294 and 301-329; these read FIHIITGVAVFLGVTFFIIAFVL and AVVFLIGIIVANVPEGLLATVTVCLTLTA. The active-site 4-aspartylphosphate intermediate is the D357. K489 contacts ATP. 2 residues coordinate Mg(2+): D698 and D702. 4 helical membrane-spanning segments follow: residues 768-791, 828-855, 897-918, and 934-959; these read ISPFLLFILFDIPLPLGTVTILCI, ERLISLAYGQIGMIQASAGFFVYFVIMA, SSCHTAYFVSIVIVQWADLIIS, and ILNFALVFETCLAAFLSYTPGMDKGL.

Belongs to the cation transport ATPase (P-type) (TC 3.A.3) family. Type IIC subfamily. In terms of assembly, the sodium/potassium-transporting ATPase is composed of a catalytic alpha subunit, an auxiliary non-catalytic beta subunit and an additional regulatory subunit.

It localises to the cell membrane. The catalysed reaction is K(+)(out) + Na(+)(in) + ATP + H2O = K(+)(in) + Na(+)(out) + ADP + phosphate + H(+). In terms of biological role, this is the catalytic component of the active enzyme, which catalyzes the hydrolysis of ATP coupled with the exchange of sodium and potassium ions across the plasma membrane. This action creates the electrochemical gradient of sodium and potassium ions, providing the energy for active transport of various nutrients. The protein is Sodium/potassium-transporting ATPase subunit alpha-B of Artemia franciscana (Brine shrimp).